Consider the following 522-residue polypeptide: Maturase K (522 aa).

It belongs to the intron maturase 2 family. MatK subfamily.

The protein localises to the plastid. Its subcellular location is the chloroplast. In terms of biological role, usually encoded in the trnK tRNA gene intron. Probably assists in splicing its own and other chloroplast group II introns. This chain is Maturase K, found in Schizorhiza neglecta (Lapeirousia neglecta).